The chain runs to 286 residues: ATP synthase gamma chain (286 aa).

The protein belongs to the ATPase gamma chain family. F-type ATPases have 2 components, CF(1) - the catalytic core - and CF(0) - the membrane proton channel. CF(1) has five subunits: alpha(3), beta(3), gamma(1), delta(1), epsilon(1). CF(0) has three main subunits: a, b and c.

The protein localises to the cell inner membrane. Functionally, produces ATP from ADP in the presence of a proton gradient across the membrane. The gamma chain is believed to be important in regulating ATPase activity and the flow of protons through the CF(0) complex. This Shewanella sediminis (strain HAW-EB3) protein is ATP synthase gamma chain.